Consider the following 247-residue polypeptide: Carboxy-S-adenosyl-L-methionine synthase (247 aa).

S-adenosyl-L-methionine-binding positions include Tyr-40, 65 to 67 (GAS), 90 to 91 (DN), 122 to 123 (DI), Asn-137, and Arg-204.

The protein belongs to the class I-like SAM-binding methyltransferase superfamily. Cx-SAM synthase family. In terms of assembly, homodimer.

It catalyses the reaction prephenate + S-adenosyl-L-methionine = carboxy-S-adenosyl-L-methionine + 3-phenylpyruvate + H2O. In terms of biological role, catalyzes the conversion of S-adenosyl-L-methionine (SAM) to carboxy-S-adenosyl-L-methionine (Cx-SAM). The protein is Carboxy-S-adenosyl-L-methionine synthase of Pseudomonas entomophila (strain L48).